The sequence spans 540 residues: MLFCNDSNKELREQKVSLSHEFATDNHRVEKLSLKFENIYFDYSKNLVNDNILKTLLESASKSNLKNKIQQMFAGEKINSTENRSVLHTALRDLSNSPLVIDGQDIRKEVNEEKQRVKALVEKVTSGDWKGFSGKRITDIVNIGIGGSDLGPKMVVRALQPYHCTGLKVHFVSNVDADSLLQALHVIDPETTLFIVASKSFSTEETLLNSISAREWLLDHYEDEKAVANHFVAISSKLDKVEEFGINLEHCYKMWDWVGGRYSLWSSIGMSIAFAVGYDNFEKLLAGAYSIDKHFKETEFDKNIPVIMGLLASYYSCAYQSQSQALLPYDERLCYFVDYLQQADMESNGKSVNLAGEGVDYQTGVVLWGGVGTNGQHAFHQLLHQGNVFIPVDFIAVATSHHNYDNHQQALLANCFAQSQALMFGQSYDMVYNELLNSGLSEVQAKQLAPHKVIPGNRPSTTILLDELSPYTLGALIALYEHKIFVQGVLWDINSYDQWGVELGKKLGKNILKAMSDDSSAEYQNLDESTKWLIAKVKSK.

Glu-346 serves as the catalytic Proton donor. Active-site residues include His-377 and Lys-505.

It belongs to the GPI family.

The protein resides in the cytoplasm. It carries out the reaction alpha-D-glucose 6-phosphate = beta-D-fructose 6-phosphate. It functions in the pathway carbohydrate biosynthesis; gluconeogenesis. It participates in carbohydrate degradation; glycolysis; D-glyceraldehyde 3-phosphate and glycerone phosphate from D-glucose: step 2/4. Its function is as follows. Catalyzes the reversible isomerization of glucose-6-phosphate to fructose-6-phosphate. The protein is Glucose-6-phosphate isomerase of Francisella philomiragia subsp. philomiragia (strain ATCC 25017 / CCUG 19701 / FSC 153 / O#319-036).